The sequence spans 147 residues: Alpha-amylase/trypsin inhibitor (147 aa).

Residues 1–21 form the signal peptide; it reads MASDHRRFVLSGAVLLSVLAV.

It belongs to the protease inhibitor I6 (cereal trypsin/alpha-amylase inhibitor) family. Post-translationally, five disulfide bonds, which are essential for the inhibitor activity, are probably present. As to expression, endosperm.

The protein localises to the secreted. Functionally, alpha-amylase/trypsin inhibitor. This chain is Alpha-amylase/trypsin inhibitor, found in Hordeum vulgare (Barley).